The primary structure comprises 210 residues: Thymidylate kinase (210 aa).

Residue 10–17 participates in ATP binding; that stretch reads GLEGAGKS.

It belongs to the thymidylate kinase family.

It carries out the reaction dTMP + ATP = dTDP + ADP. Phosphorylation of dTMP to form dTDP in both de novo and salvage pathways of dTTP synthesis. This chain is Thymidylate kinase, found in Haemophilus influenzae (strain PittGG).